A 143-amino-acid polypeptide reads, in one-letter code: Nucleoside diphosphate kinase (143 aa).

Residues Lys11, Phe59, Arg87, Thr93, Arg104, and Asn114 each coordinate ATP. The active-site Pros-phosphohistidine intermediate is His117.

The protein belongs to the NDK family. As to quaternary structure, homotetramer. Mg(2+) serves as cofactor.

Its subcellular location is the cytoplasm. It carries out the reaction a 2'-deoxyribonucleoside 5'-diphosphate + ATP = a 2'-deoxyribonucleoside 5'-triphosphate + ADP. It catalyses the reaction a ribonucleoside 5'-diphosphate + ATP = a ribonucleoside 5'-triphosphate + ADP. Functionally, major role in the synthesis of nucleoside triphosphates other than ATP. The ATP gamma phosphate is transferred to the NDP beta phosphate via a ping-pong mechanism, using a phosphorylated active-site intermediate. The polypeptide is Nucleoside diphosphate kinase (Shewanella pealeana (strain ATCC 700345 / ANG-SQ1)).